The chain runs to 3103 residues: Extracellular matrix protein 3 (3103 aa).

Residues Met1–Ala19 form the signal peptide. The Extracellular portion of the chain corresponds to Gln20 to Asn3047. CSPG repeat units lie at residues Pro289 to Val388, Ala411 to Thr499, Ala520 to Val630, Pro656 to Gln762, Gln784 to Thr875, Leu901 to Ser993, Ala1022 to Thr1124, Glu1145 to Thr1238, Thr1259 to Thr1357, Val1378 to Thr1470, Lys1490 to Thr1579, and Ala1613 to Arg1710. N-linked (GlcNAc...) asparagine glycans are attached at residues Asn330 and Asn453. N-linked (GlcNAc...) asparagine glycosylation is found at Asn989, Asn1024, Asn1042, Asn1207, Asn1294, Asn1321, and Asn1327. Residues Asn1542, Asn1674, Asn1679, Asn1725, and Asn1739 are each glycosylated (N-linked (GlcNAc...) asparagine). Calx-beta domains are found at residues Leu1717–His1816, Ala1829–Ser1942, Asn1956–Asn2062, and Ile2077–Gly2179. N-linked (GlcNAc...) asparagine glycosylation is found at Asn2080, Asn2195, Asn2274, Asn2385, and Asn2932. One can recognise a Calx-beta 5 domain in the interval Thr2197–Thr2302. Residues Ser2983–Ala3013 form a disordered region. Residues Val3048–Ile3068 traverse the membrane as a helical segment. The Cytoplasmic segment spans residues Gly3069–Val3103.

This sequence belongs to the FRAS1 family. In terms of tissue distribution, component of extracellular matrix fibers that interact with PMC filopodia during gastrulation (at protein level).

The protein resides in the cell membrane. Functionally, extracellular matrix protein that may serve as substrate for the migratory primary mesenchyme cells (PMCs), the interaction possibly providing guidance information to migrating PMCs. The protein is Extracellular matrix protein 3 (ECM3) of Lytechinus variegatus (Green sea urchin).